The chain runs to 910 residues: Valine--tRNA ligase (910 aa).

A 'HIGH' region motif is present at residues 45 to 55 (PNVTGSLHMGH). The 'KMSKS' region signature appears at 554–558 (KMSKS). Lys557 contributes to the ATP binding site. A coiled-coil region spans residues 842–910 (DLQAEAARLA…TAESRIRDAS (69 aa)).

This sequence belongs to the class-I aminoacyl-tRNA synthetase family. ValS type 1 subfamily. In terms of assembly, monomer.

It is found in the cytoplasm. It carries out the reaction tRNA(Val) + L-valine + ATP = L-valyl-tRNA(Val) + AMP + diphosphate. Functionally, catalyzes the attachment of valine to tRNA(Val). As ValRS can inadvertently accommodate and process structurally similar amino acids such as threonine, to avoid such errors, it has a 'posttransfer' editing activity that hydrolyzes mischarged Thr-tRNA(Val) in a tRNA-dependent manner. The sequence is that of Valine--tRNA ligase from Brucella suis biovar 1 (strain 1330).